A 179-amino-acid chain; its full sequence is Transcriptional repressor NrdR (179 aa).

The segment at 3 to 34 is a zinc-finger region; that stretch reads CPYCQHTNSRVLESRSSEGGQSIRRRRECLCC. Positions 49–139 constitute an ATP-cone domain; that stretch reads ITVIKHDGKK…VYGRFQGIKD (91 aa). The interval 160–179 is disordered; the sequence is KPANDDFSEQETPSTVMMPS. The span at 169 to 179 shows a compositional bias: polar residues; it reads QETPSTVMMPS.

This sequence belongs to the NrdR family. Zn(2+) is required as a cofactor.

Functionally, negatively regulates transcription of bacterial ribonucleotide reductase nrd genes and operons by binding to NrdR-boxes. In Rippkaea orientalis (strain PCC 8801 / RF-1) (Cyanothece sp. (strain PCC 8801)), this protein is Transcriptional repressor NrdR.